Here is a 584-residue protein sequence, read N- to C-terminus: MANEDCPKAADSPFSSDKHAQLILAQINKMRNGQHFCDVQLQVGQESFKAHRLVLAASSPYFAALFTGGMKESSKDVVPILGIEAGIFQILLDFIYTGIVNIGVNNVQELIIAADMLQLTEVVHLCCEFLKGQIDPLNCIGIFQFSEQIACHDLLEFSENYIHVHFLEVHSGEEFLALTKDQLIKILRSEELSIEDEYQVFLAAMQWILKDLGKRRKHVVEVLDPIRFPLLPPQRLLKYIEGVSDFNLRVALQTLLKEYCEVCKSPKENKFCSFLQTSKVRPRKKARKYLYAVGGYTRLQGGRWSDSRALSCVERFDTFSQYWTTVSSLHQARSGLGVTVLGGMVYAIGGEKDSMIFDCTECYDPVTKQWTTVASMNHPRCGLGVCVCYGAIYALGGWVGAEIGNTIERFDPDENKWEVVGNMAVSRYYFGCCEMQGLIYVIGGISNEGIELRSFEVYDPLSKRWSPLPPMGTRRAYLGVAALNDCIYSVGGWNETQDALHTVEKYSFEEEKWVEVASMKVPRAGMCVVAVNGLLYVSGGRSSSHDFLAPGTLDSVEVYNPHSDTWTEIGNMITSRCEGGVAVL.

The BTB domain maps to C37–V104. Kelch repeat units follow at residues Y289–G343, M344–G390, A391–G437, I439–D485, I487–G533, and L535–V583.

Its subcellular location is the cytoplasm. The protein resides in the cytoskeleton. Functionally, may play a role in organizing the actin cytoskeleton. This chain is Actin-binding protein IPP (IPP), found in Homo sapiens (Human).